We begin with the raw amino-acid sequence, 63 residues long: Large ribosomal subunit protein uL29 (63 aa).

The protein belongs to the universal ribosomal protein uL29 family.

The protein is Large ribosomal subunit protein uL29 of Bordetella petrii (strain ATCC BAA-461 / DSM 12804 / CCUG 43448).